Here is a 503-residue protein sequence, read N- to C-terminus: Probable cytosol aminopeptidase (503 aa).

Positions 274 and 279 each coordinate Mn(2+). Lys-286 is an active-site residue. Asp-297, Asp-356, and Glu-358 together coordinate Mn(2+). Residue Arg-360 is part of the active site.

It belongs to the peptidase M17 family. Requires Mn(2+) as cofactor.

The protein resides in the cytoplasm. The enzyme catalyses Release of an N-terminal amino acid, Xaa-|-Yaa-, in which Xaa is preferably Leu, but may be other amino acids including Pro although not Arg or Lys, and Yaa may be Pro. Amino acid amides and methyl esters are also readily hydrolyzed, but rates on arylamides are exceedingly low.. The catalysed reaction is Release of an N-terminal amino acid, preferentially leucine, but not glutamic or aspartic acids.. Its function is as follows. Presumably involved in the processing and regular turnover of intracellular proteins. Catalyzes the removal of unsubstituted N-terminal amino acids from various peptides. In Burkholderia ambifaria (strain MC40-6), this protein is Probable cytosol aminopeptidase.